A 238-amino-acid polypeptide reads, in one-letter code: C-type lectin domain family 4 member A (238 aa).

The Cytoplasmic portion of the chain corresponds to 1–48 (MASEITYAEVKFKNESNSLHTYSESPAAPREKPIRDLRKPGSPSLLLT). Residues 5-10 (ITYAEV) carry the ITIM motif motif. A helical; Signal-anchor for type II membrane protein transmembrane segment spans residues 49 to 69 (SLMLLLLLLAITFLVAFIIYF). Residues 70 to 238 (QKYSQLLEEK…SVCQMKKINL (169 aa)) are Extracellular-facing. N91 carries N-linked (GlcNAc...) asparagine glycosylation. Residues C107 and C118 are joined by a disulfide bond. Residues 126-233 (SSASWNKSEE…SLKQKSVCQM (108 aa)) enclose the C-type lectin domain. N-linked (GlcNAc...) asparagine glycosylation is found at N131 and N136. 2 disulfides stabilise this stretch: C137–C231 and C205–C223. Ca(2+) is bound by residues V146, E152, E197, S199, and E203. Alpha-D-mannopyranose-binding positions include 197 to 199 (EPS) and E203. N-acetyl-D-glucosamine is bound at residue 209-211 (IYR). N219 and D220 together coordinate Ca(2+).

In terms of assembly, may interact with PTPN6 via its ITIM site. In terms of tissue distribution, expressed in splenic antigen-presenting cells including B-cells, monocytes/macrophages, and dendritic cells (at protein level). Expressed in spleen and lymph node and slightly increased with dendritic cell maturation.

It is found in the cell membrane. Its function is as follows. May be involved in regulating immune reactivity. May play a role in modulating dendritic cells (DC) differentiation and/or maturation. May be involved in the inhibition of B-cell-receptor-mediated calcium mobilization and protein tyrosine phosphorylation. C-type lectin receptor that binds carbohydrates mannose and fucose but also weakly interacts with N-acetylglucosamine (GlcNAc) in a Ca(2+)-dependent manner. Involved in regulating immune reactivity. Once triggered by antigen, it is internalized by clathrin-dependent endocytosis and delivers its antigenic cargo into the antigen presentation pathway resulting in cross-priming of CD8(+) T cells. This cross-presentation and cross-priming are enhanced by TLR7 and TLR8 agonists with increased expansion of the CD8(+) T cells, high production of IFNG and TNF with reduced levels of IL4, IL5 and IL13. In plasmacytoid dendritic cells, inhibits TLR9-mediated IFNA and TNF production. May be involved via its ITIM motif (immunoreceptor tyrosine-based inhibitory motifs) in the inhibition of B-cell-receptor-mediated calcium mobilization and protein tyrosine phosphorylation. The chain is C-type lectin domain family 4 member A (Clec4a) from Mus musculus (Mouse).